The primary structure comprises 294 residues: ATP phosphoribosyltransferase (294 aa).

It belongs to the ATP phosphoribosyltransferase family. Long subfamily. The cofactor is Mg(2+).

It localises to the cytoplasm. It catalyses the reaction 1-(5-phospho-beta-D-ribosyl)-ATP + diphosphate = 5-phospho-alpha-D-ribose 1-diphosphate + ATP. It participates in amino-acid biosynthesis; L-histidine biosynthesis; L-histidine from 5-phospho-alpha-D-ribose 1-diphosphate: step 1/9. Its activity is regulated as follows. Feedback inhibited by histidine. In terms of biological role, catalyzes the condensation of ATP and 5-phosphoribose 1-diphosphate to form N'-(5'-phosphoribosyl)-ATP (PR-ATP). Has a crucial role in the pathway because the rate of histidine biosynthesis seems to be controlled primarily by regulation of HisG enzymatic activity. The chain is ATP phosphoribosyltransferase from Chlorobium chlorochromatii (strain CaD3).